Consider the following 427-residue polypeptide: Peptidase B (427 aa).

Positions 195 and 200 each coordinate Mn(2+). Residue Lys207 is part of the active site. Asp218, Asp277, and Glu279 together coordinate Mn(2+). The active site involves Arg281.

This sequence belongs to the peptidase M17 family. As to quaternary structure, homohexamer. Mn(2+) is required as a cofactor.

The protein localises to the cytoplasm. It catalyses the reaction Release of an N-terminal amino acid, Xaa, from a peptide or arylamide. Xaa is preferably Glu or Asp but may be other amino acids, including Leu, Met, His, Cys and Gln.. Probably plays an important role in intracellular peptide degradation. In Escherichia coli O127:H6 (strain E2348/69 / EPEC), this protein is Peptidase B.